A 589-amino-acid polypeptide reads, in one-letter code: Kelch-like protein diablo (589 aa).

Residues 1 to 22 (MGDVLISDRPPSPARLSHTSEK) are disordered. The BTB domain occupies 41-108 (CDVVINVSGR…CYTSHIVVEE (68 aa)). Residues 143–245 (CLGIRAFADT…SPKFLVGTVG (103 aa)) form the BACK domain. Kelch repeat units lie at residues 292–338 (VLFA…VLND), 340–386 (LYAV…VLDG), 387–433 (FLYA…VLGG), 435–480 (LYAI…VFNN), 482–527 (IYAV…VVNG), and 528–574 (QLYA…VMRA).

It participates in protein modification; protein ubiquitination. Probable substrate-specific adapter of an E3 ubiquitin-protein ligase complex which mediates the ubiquitination and subsequent proteasomal degradation of target proteins. May have a role in synapse differentiation and growth. In Aedes aegypti (Yellowfever mosquito), this protein is Kelch-like protein diablo.